A 103-amino-acid polypeptide reads, in one-letter code: MYAVFQSGGKQHRVAEGHTVRLEKLEVATGETVEFDQVLLVADGETVHVGAPLVEGGKVVAEVVSHGRDEKVTIVKFRRRKHHDKKMGHRQWFTEVKITAINA.

Belongs to the bacterial ribosomal protein bL21 family. As to quaternary structure, part of the 50S ribosomal subunit. Contacts protein L20.

In terms of biological role, this protein binds to 23S rRNA in the presence of protein L20. The protein is Large ribosomal subunit protein bL21 of Shewanella woodyi (strain ATCC 51908 / MS32).